The following is an 819-amino-acid chain: Mitosis inhibitor protein kinase SWE1 (819 aa).

Serine 36 is modified (phosphoserine; by CDC5). A Phosphothreonine; by CDC28 modification is found at threonine 45. Residues serine 56 and serine 63 each carry the phosphoserine; by CDC28 modification. At serine 70 the chain carries Phosphoserine. At threonine 74 the chain carries Phosphothreonine; by CDC28. Residues 86 to 105 (KIEEEEEEEEEGKDEESVDS) are disordered. The span at 88–102 (EEEEEEEEEGKDEES) shows a compositional bias: acidic residues. A Phosphoserine; by CDC5 modification is found at serine 102. Phosphoserine; by CDC28 is present on serine 105. Phosphoserine; by CDC5, CDC28 and CLA4 is present on serine 111. Residues 117-168 (ESVTTPITKRSAEKTNSPISLKQWNQRWFPKNDARTENTSSSSSYSVAKPNQ) form a disordered region. Position 118 is a phosphoserine; by CDC5 (serine 118). Positions 118–142 (SVTTPITKRSAEKTNSPISLKQWNQ) are enriched in polar residues. 2 positions are modified to phosphothreonine; by CDC28: threonine 121 and threonine 124. Serine 127 carries the phosphoserine; by CDC28 modification. Threonine 131 carries the post-translational modification Phosphothreonine; by CDC5. Serine 133 is modified (phosphoserine; by CDC28). The residue at position 136 (serine 136) is a Phosphoserine; by CDC28 and CLA4. Phosphoserine; by CDC5 occurs at positions 156 and 169. At threonine 196 the chain carries Phosphothreonine; by CDC28. Serine 201 is subject to Phosphoserine; by CDC28. 2 positions are modified to phosphoserine; by CDC5: serine 225 and serine 254. Serine 262 carries the post-translational modification Phosphoserine. Serine 263 and serine 266 each carry phosphoserine; by CDC28. A disordered region spans residues 278–297 (NQTNILSPTNSLVTNSSPQT). Threonine 280 carries the phosphothreonine; by CDC5 modification. 2 positions are modified to phosphoserine: serine 284 and serine 294. Serine 312 is subject to Phosphoserine; by CLA4. Residues 341–395 (PIIISSHHSTRKNPQPYQFRGRYDNDTDEEISTPTRRKSIIGATSQTHRESRPLS) are disordered. Position 345 is a phosphoserine (serine 345). Threonine 367 and threonine 373 each carry phosphothreonine; by CDC28. A Phosphoserine; by CDC5 and CLA4 modification is found at serine 379. Threonine 384 carries the phosphothreonine; by CDC28 modification. 2 positions are modified to phosphoserine; by CDC5 and CLA4: serine 395 and serine 438. Residues 444-794 (FTNVHSIGKG…NQILQTEECL (351 aa)) enclose the Protein kinase domain. Residues 450-458 (IGKGQFSTV) and lysine 473 each bind ATP. Aspartate 579 (proton acceptor) is an active-site residue. The Mg(2+) site is built by asparagine 584 and aspartate 597. Serine 610 is modified (phosphoserine; by CDC5). At threonine 629 the chain carries Phosphothreonine; by CDC5. Threonine 688 carries the phosphothreonine; by CDC5 and CLA4 modification. A Phosphothreonine modification is found at threonine 692. Positions 707 to 716 (SNNAGTSTVH) are enriched in polar residues. The interval 707-736 (SNNAGTSTVHNNSNINNPNMNNGNDNNNVN) is disordered. A compositionally biased stretch (low complexity) spans 717-736 (NNSNINNPNMNNGNDNNNVN). A Glycyl lysine isopeptide (Lys-Gly) (interchain with G-Cter in ubiquitin) cross-link involves residue lysine 741.

The protein belongs to the protein kinase superfamily. Ser/Thr protein kinase family. WEE1 subfamily. Interacts with CLB2-CDC28. Partial hyperphosphorylation of SWE1 by CLB2-CDC28 stabilizes the ternary complex of SWE1 and CLB2-CDC28 and stimulates kinase activity of SWE1 in a positive feedback loop, maintaining CLB2-CDC28 in the tyrosine-phosphorylated state. Fully hyperphosphorylated SWE1 dissociates from CLB2-CDC28. Interacts with HSL7, KCC4 and MET30. Post-translationally, ubiquitinated by the SCF(MET30) complex, leading to its degradation by the proteasome. Phosphorylated progressively by CLA4, CLB2-CDC28 and CDC5. CLA4-dependent phosphorylation occurs in late S phase, followed by phosphorylation by CLB2-CDC28 in early G2, when the levels of mitotic CLB2 increases. This phosphorylation is critical for triggering subsequent SWE1-CDC5 interaction and CDC5-dependent phosphorylation. The resulting cumulative hyperphosphorylation down-regulates SWE1 by targeting it for ubiquitin-mediated degradation. This stepwise phosphorylation is thought to be a mechanism to integrate the different checkpoint requirements before entry into mitosis.

It is found in the bud neck. The protein localises to the nucleus. The enzyme catalyses L-seryl-[protein] + ATP = O-phospho-L-seryl-[protein] + ADP + H(+). It catalyses the reaction L-threonyl-[protein] + ATP = O-phospho-L-threonyl-[protein] + ADP + H(+). In terms of biological role, protein kinase that acts as a negative regulator of entry into mitosis (G2 to M transition) by phosphorylating and inhibiting the mitosis-promoting cyclin B-bound CDC28 at 'Tyr-19'. SWE1-mediated inhibition of CDC28 acts in a cell size or morphogenesis checkpoint to delay mitosis in response to defects in growth, actin organization or bud formation. Inhibits the activity of B-type cyclins in replication initiation strongly for CLB2, moderately for CLB3 and CLB4, and there is no apparent inhibition for CLB5 and CLB6, correlating with the normal expression timing of those cyclins. Hyperphosphorylation and degradation of SWE1 when all checkpoint requirement are met releases CLB2-CDC28 from inhibition and allows for progression through the cell cycle. SWE1-dependent CDC28 phosphorylation is also required for pachytene arrest upon activation of the recombination checkpoint during meiosis. Also involved in the regulation of nitrogen starvation- and short chain alcohol-induced filamentous growth, or filamentous differentiation in response to slowed DNA synthesis. Can act both on serines and on tyrosines. In Saccharomyces cerevisiae (strain ATCC 204508 / S288c) (Baker's yeast), this protein is Mitosis inhibitor protein kinase SWE1 (SWE1).